We begin with the raw amino-acid sequence, 140 residues long: Large ribosomal subunit protein bL17 (140 aa).

The protein belongs to the bacterial ribosomal protein bL17 family. Part of the 50S ribosomal subunit. Contacts protein L32.

The chain is Large ribosomal subunit protein bL17 from Methylobacterium nodulans (strain LMG 21967 / CNCM I-2342 / ORS 2060).